Reading from the N-terminus, the 563-residue chain is GTPase Obg (563 aa).

Residues 2-168 (SDFVDRVTVH…RDVILELKSI (167 aa)) form the Obg domain. In terms of domain architecture, OBG-type G spans 169 to 349 (ADVALVGFPS…LNFALSALVH (181 aa)). GTP contacts are provided by residues 175-182 (GFPSAGKS), 200-204 (FTTLV), 221-224 (DVPG), 301-304 (NKID), and 330-332 (STA). Mg(2+) contacts are provided by S182 and T202. The OCT domain maps to 383-469 (DEGGSALEFT…ARMVEFDWDP (87 aa)). Disordered regions lie at residues 478–509 (LDGS…ERRA) and 528–563 (ERKA…ETEE). Positions 486 to 509 (RGKDLRLEEQDPRTHRRSNAERRA) are enriched in basic and acidic residues.

It belongs to the TRAFAC class OBG-HflX-like GTPase superfamily. OBG GTPase family. As to quaternary structure, monomer. The cofactor is Mg(2+).

The protein resides in the cytoplasm. Its function is as follows. An essential GTPase which binds GTP, GDP and possibly (p)ppGpp with moderate affinity, with high nucleotide exchange rates and a fairly low GTP hydrolysis rate. Plays a role in control of the cell cycle, stress response, ribosome biogenesis and in those bacteria that undergo differentiation, in morphogenesis control. The chain is GTPase Obg from Bifidobacterium longum subsp. infantis (strain ATCC 15697 / DSM 20088 / JCM 1222 / NCTC 11817 / S12).